Reading from the N-terminus, the 1209-residue chain is DNA-directed RNA polymerase subunit beta'' (1209 aa).

The Zn(2+) site is built by cysteine 233, cysteine 308, cysteine 315, and cysteine 318.

Belongs to the RNA polymerase beta' chain family. RpoC2 subfamily. In plastids the minimal PEP RNA polymerase catalytic core is composed of four subunits: alpha, beta, beta', and beta''. When a (nuclear-encoded) sigma factor is associated with the core the holoenzyme is formed, which can initiate transcription. Zn(2+) serves as cofactor.

The protein resides in the plastid. Its subcellular location is the chloroplast. It carries out the reaction RNA(n) + a ribonucleoside 5'-triphosphate = RNA(n+1) + diphosphate. In terms of biological role, DNA-dependent RNA polymerase catalyzes the transcription of DNA into RNA using the four ribonucleoside triphosphates as substrates. The sequence is that of DNA-directed RNA polymerase subunit beta'' from Pinus koraiensis (Korean pine).